Consider the following 389-residue polypeptide: Phosphoribosylformylglycinamidine cyclo-ligase, chloroplastic (389 aa).

Residues 1–58 constitute a chloroplast transit peptide; that stretch reads MEARILQSSSSCYSSLYAVNRSRFSSVSSPKPFSVSFAQTTRTRTRVLSMSKKDGRTD. The tract at residues 46 to 65 is disordered; the sequence is RVLSMSKKDGRTDKDDDTDS.

This sequence belongs to the AIR synthase family.

The protein localises to the plastid. The protein resides in the chloroplast. It catalyses the reaction 2-formamido-N(1)-(5-O-phospho-beta-D-ribosyl)acetamidine + ATP = 5-amino-1-(5-phospho-beta-D-ribosyl)imidazole + ADP + phosphate + H(+). The protein operates within purine metabolism; IMP biosynthesis via de novo pathway; 5-amino-1-(5-phospho-D-ribosyl)imidazole from N(2)-formyl-N(1)-(5-phospho-D-ribosyl)glycinamide: step 2/2. The sequence is that of Phosphoribosylformylglycinamidine cyclo-ligase, chloroplastic (PUR5) from Arabidopsis thaliana (Mouse-ear cress).